Here is a 461-residue protein sequence, read N- to C-terminus: tRNA modification GTPase MnmE (461 aa).

(6S)-5-formyl-5,6,7,8-tetrahydrofolate-binding residues include lysine 32, glutamate 89, and lysine 128. Positions glycine 224–proline 387 constitute a TrmE-type G domain. K(+) is bound at residue asparagine 234. GTP contacts are provided by residues asparagine 234 to serine 239, serine 253 to threonine 259, and aspartate 278 to glycine 281. A Mg(2+)-binding site is contributed by serine 238. 3 residues coordinate K(+): serine 253, isoleucine 255, and threonine 258. Threonine 259 serves as a coordination point for Mg(2+). (6S)-5-formyl-5,6,7,8-tetrahydrofolate is bound at residue lysine 461.

It belongs to the TRAFAC class TrmE-Era-EngA-EngB-Septin-like GTPase superfamily. TrmE GTPase family. Homodimer. Heterotetramer of two MnmE and two MnmG subunits. K(+) is required as a cofactor.

The protein localises to the cytoplasm. Its function is as follows. Exhibits a very high intrinsic GTPase hydrolysis rate. Involved in the addition of a carboxymethylaminomethyl (cmnm) group at the wobble position (U34) of certain tRNAs, forming tRNA-cmnm(5)s(2)U34. The sequence is that of tRNA modification GTPase MnmE from Helicobacter pylori (strain J99 / ATCC 700824) (Campylobacter pylori J99).